The following is a 343-amino-acid chain: Heme A synthase (343 aa).

8 helical membrane-spanning segments follow: residues 13 to 33 (VAIW…VGGA), 96 to 116 (HRLL…VFLI), 130 to 150 (AMLG…SSGL), 161 to 181 (LMTH…TALD), 197 to 217 (GWAL…ALVA), 258 to 278 (FNHR…VVLA), 294 to 314 (AVAA…MAAV), and 318 to 338 (LGVL…AFAW). Residue H260 participates in heme binding. H322 provides a ligand contact to heme.

Belongs to the COX15/CtaA family. Type 2 subfamily. Interacts with CtaB. It depends on heme b as a cofactor.

It localises to the cell membrane. It carries out the reaction Fe(II)-heme o + 2 A + H2O = Fe(II)-heme a + 2 AH2. It participates in porphyrin-containing compound metabolism; heme A biosynthesis; heme A from heme O: step 1/1. Functionally, catalyzes the conversion of heme O to heme A by two successive hydroxylations of the methyl group at C8. The first hydroxylation forms heme I, the second hydroxylation results in an unstable dihydroxymethyl group, which spontaneously dehydrates, resulting in the formyl group of heme A. The polypeptide is Heme A synthase (Caulobacter vibrioides (strain ATCC 19089 / CIP 103742 / CB 15) (Caulobacter crescentus)).